A 620-amino-acid polypeptide reads, in one-letter code: UDP-glucose:protein N-beta-glucosyltransferase (620 aa).

Belongs to the glycosyltransferase 41 family. The cofactor is Does not require a metal cofactor..

It localises to the cytoplasm. It carries out the reaction L-asparaginyl-[protein] + UDP-alpha-D-glucose = N(4)-(beta-D-glucosyl)-L-asparaginyl-[protein] + UDP + H(+). The protein operates within protein modification; protein glycosylation. Functionally, inverting glycosyltransferase that catalyzes the transfer of one glucose moiety from UDP-glucose to an asparagine residue in peptides and proteins containing the NX(S/T) motif, resulting in their modification with a beta-linked 1,N-glucose. Likely acts as a key component of a general protein glycosylation system. Also accepts UDP-galactose as a substrate donor, albeit with low efficiency. Cannot use UDP-GlcNAc or UDP-GalNAc as substrate donor. The sequence is that of UDP-glucose:protein N-beta-glucosyltransferase from Actinobacillus pleuropneumoniae serotype 7 (strain AP76).